The sequence spans 384 residues: Dihydrolipoyllysine-residue acetyltransferase component of pyruvate dehydrogenase complex (384 aa).

One can recognise a Lipoyl-binding domain in the interval 2–77 (ANEFKFTDVG…SIGQVMAVIG (76 aa)). Lys-43 carries the N6-lipoyllysine modification. Residue His-356 is part of the active site.

The protein belongs to the 2-oxoacid dehydrogenase family. Forms a 24-polypeptide structural core with octahedral symmetry. The cofactor is (R)-lipoate.

The enzyme catalyses N(6)-[(R)-dihydrolipoyl]-L-lysyl-[protein] + acetyl-CoA = N(6)-[(R)-S(8)-acetyldihydrolipoyl]-L-lysyl-[protein] + CoA. In terms of biological role, the pyruvate dehydrogenase complex catalyzes the overall conversion of pyruvate to acetyl-CoA and CO(2). It contains multiple copies of three enzymatic components: pyruvate dehydrogenase (E1), dihydrolipoamide acetyltransferase (E2) and lipoamide dehydrogenase (E3). The sequence is that of Dihydrolipoyllysine-residue acetyltransferase component of pyruvate dehydrogenase complex (pdhC) from Mycoplasma genitalium (strain ATCC 33530 / DSM 19775 / NCTC 10195 / G37) (Mycoplasmoides genitalium).